The following is a 271-amino-acid chain: Undecaprenyl-diphosphatase (271 aa).

The next 8 helical transmembrane spans lie at Tyr-5 to Val-25, Ala-45 to Trp-65, Thr-86 to Ile-106, Leu-114 to Ala-134, Ile-149 to Phe-169, Ala-189 to Leu-209, Val-226 to Ile-246, and Phe-251 to Ala-271.

It belongs to the UppP family.

It is found in the cell inner membrane. It carries out the reaction di-trans,octa-cis-undecaprenyl diphosphate + H2O = di-trans,octa-cis-undecaprenyl phosphate + phosphate + H(+). Functionally, catalyzes the dephosphorylation of undecaprenyl diphosphate (UPP). Confers resistance to bacitracin. This chain is Undecaprenyl-diphosphatase, found in Aeromonas salmonicida (strain A449).